The primary structure comprises 258 residues: Imidazole glycerol phosphate synthase subunit HisF (258 aa).

Residues Asp-11 and Asp-130 contribute to the active site.

It belongs to the HisA/HisF family. Heterodimer of HisH and HisF.

The protein resides in the cytoplasm. The enzyme catalyses 5-[(5-phospho-1-deoxy-D-ribulos-1-ylimino)methylamino]-1-(5-phospho-beta-D-ribosyl)imidazole-4-carboxamide + L-glutamine = D-erythro-1-(imidazol-4-yl)glycerol 3-phosphate + 5-amino-1-(5-phospho-beta-D-ribosyl)imidazole-4-carboxamide + L-glutamate + H(+). Its pathway is amino-acid biosynthesis; L-histidine biosynthesis; L-histidine from 5-phospho-alpha-D-ribose 1-diphosphate: step 5/9. In terms of biological role, IGPS catalyzes the conversion of PRFAR and glutamine to IGP, AICAR and glutamate. The HisF subunit catalyzes the cyclization activity that produces IGP and AICAR from PRFAR using the ammonia provided by the HisH subunit. This is Imidazole glycerol phosphate synthase subunit HisF from Haemophilus influenzae (strain PittEE).